The following is a 316-amino-acid chain: Aspartate carbamoyltransferase catalytic subunit (316 aa).

Carbamoyl phosphate contacts are provided by Arg-58 and Thr-59. L-aspartate is bound at residue Lys-86. Residues Arg-108, His-136, and Gln-139 each coordinate carbamoyl phosphate. Positions 169 and 223 each coordinate L-aspartate. Carbamoyl phosphate contacts are provided by Gly-264 and Pro-265.

The protein belongs to the aspartate/ornithine carbamoyltransferase superfamily. ATCase family. As to quaternary structure, heterododecamer (2C3:3R2) of six catalytic PyrB chains organized as two trimers (C3), and six regulatory PyrI chains organized as three dimers (R2).

The enzyme catalyses carbamoyl phosphate + L-aspartate = N-carbamoyl-L-aspartate + phosphate + H(+). The protein operates within pyrimidine metabolism; UMP biosynthesis via de novo pathway; (S)-dihydroorotate from bicarbonate: step 2/3. In terms of biological role, catalyzes the condensation of carbamoyl phosphate and aspartate to form carbamoyl aspartate and inorganic phosphate, the committed step in the de novo pyrimidine nucleotide biosynthesis pathway. This is Aspartate carbamoyltransferase catalytic subunit from Dinoroseobacter shibae (strain DSM 16493 / NCIMB 14021 / DFL 12).